Here is a 393-residue protein sequence, read N- to C-terminus: Phosphoglycerate kinase (393 aa).

Residues 21 to 23 (DFN), R36, 59 to 62 (HLGR), R118, and R151 each bind substrate. ATP-binding positions include K201, E323, and 349–352 (GGDS).

Belongs to the phosphoglycerate kinase family. In terms of assembly, monomer.

The protein localises to the cytoplasm. It carries out the reaction (2R)-3-phosphoglycerate + ATP = (2R)-3-phospho-glyceroyl phosphate + ADP. It participates in carbohydrate degradation; glycolysis; pyruvate from D-glyceraldehyde 3-phosphate: step 2/5. This Moorella thermoacetica (strain ATCC 39073 / JCM 9320) protein is Phosphoglycerate kinase.